Consider the following 266-residue polypeptide: DLA class II histocompatibility antigen, DR-1 beta chain (266 aa).

The signal sequence occupies residues 1-29; that stretch reads MVCLCFLGGSWMTALMLILMVLNPPFAWA. Positions 30-124 are beta-1; that stretch reads RDTPPHFLEV…IESFTVQRRV (95 aa). Topologically, residues 30–227 are extracellular; that stretch reads RDTPPHFLEV…RAQSDSAQSK (198 aa). Disulfide bonds link C44-C108 and C146-C202. N48 carries N-linked (GlcNAc...) asparagine glycosylation. The tract at residues 125–227 is beta-2; that stretch reads EPTVTVYPTK…RAQSDSAQSK (103 aa). The Ig-like C1-type domain maps to 126–214; the sequence is PTVTVYPTKT…EHPSLTSPVT (89 aa). Residues 228–250 form a helical membrane-spanning segment; that stretch reads MLSGIGGFVLGLLFLAVGLFIYF. Over 251 to 266 the chain is Cytoplasmic; sequence RNQKGHSGLQPTGLLS.

The protein belongs to the MHC class II family.

It is found in the membrane. This Canis lupus familiaris (Dog) protein is DLA class II histocompatibility antigen, DR-1 beta chain.